Here is a 658-residue protein sequence, read N- to C-terminus: Glycogen debranching enzyme (658 aa).

Aspartate 335 functions as the Nucleophile in the catalytic mechanism. The active-site Proton donor is the glutamate 370. A compositionally biased stretch (basic and acidic residues) spans asparagine 457 to threonine 468. The disordered stretch occupies residues asparagine 457–leucine 481.

It belongs to the glycosyl hydrolase 13 family.

It carries out the reaction Hydrolysis of (1-&gt;6)-alpha-D-glucosidic linkages to branches with degrees of polymerization of three or four glucose residues in limit dextrin.. It functions in the pathway glycan degradation; glycogen degradation. Removes maltotriose and maltotetraose chains that are attached by 1,6-alpha-linkage to the limit dextrin main chain, generating a debranched limit dextrin. The chain is Glycogen debranching enzyme from Pectobacterium atrosepticum (strain SCRI 1043 / ATCC BAA-672) (Erwinia carotovora subsp. atroseptica).